Reading from the N-terminus, the 166-residue chain is Heavy metal-associated isoprenylated plant protein 45 (166 aa).

Residues 15-78 (LSIVELLVDM…MVKRTGRTAE (64 aa)) form the HMA domain. A metal cation contacts are provided by Cys26 and Cys29. Cys163 carries the post-translational modification Cysteine methyl ester. Cys163 carries S-farnesyl cysteine lipidation. The propeptide at 164 to 166 (TIM) is removed in mature form.

This sequence belongs to the HIPP family.

Heavy-metal-binding protein. The sequence is that of Heavy metal-associated isoprenylated plant protein 45 from Arabidopsis thaliana (Mouse-ear cress).